We begin with the raw amino-acid sequence, 480 residues long: Aspartyl/glutamyl-tRNA(Asn/Gln) amidotransferase subunit B (480 aa).

This sequence belongs to the GatB/GatE family. GatB subfamily. In terms of assembly, heterotrimer of A, B and C subunits.

The enzyme catalyses L-glutamyl-tRNA(Gln) + L-glutamine + ATP + H2O = L-glutaminyl-tRNA(Gln) + L-glutamate + ADP + phosphate + H(+). The catalysed reaction is L-aspartyl-tRNA(Asn) + L-glutamine + ATP + H2O = L-asparaginyl-tRNA(Asn) + L-glutamate + ADP + phosphate + 2 H(+). Allows the formation of correctly charged Asn-tRNA(Asn) or Gln-tRNA(Gln) through the transamidation of misacylated Asp-tRNA(Asn) or Glu-tRNA(Gln) in organisms which lack either or both of asparaginyl-tRNA or glutaminyl-tRNA synthetases. The reaction takes place in the presence of glutamine and ATP through an activated phospho-Asp-tRNA(Asn) or phospho-Glu-tRNA(Gln). This chain is Aspartyl/glutamyl-tRNA(Asn/Gln) amidotransferase subunit B, found in Streptococcus pneumoniae (strain P1031).